The sequence spans 300 residues: Platelet-derived growth factor D (300 aa).

The CUB domain maps to 1–114 (QVTGNGHVQS…PGFKIYYSFV (114 aa)). An intrachain disulfide couples Cys-53 to Cys-75. Asn-220 is a glycosylation site (N-linked (GlcNAc...) asparagine).

This sequence belongs to the PDGF/VEGF growth factor family. In terms of assembly, homodimer; disulfide-linked. Interacts with PDGFRB homodimers, and with heterodimers formed by PDGFRA and PDGFRB. Activated by proteolytic cleavage. Proteolytic removal of the N-terminal CUB domain releasing the core domain is necessary for unmasking the receptor-binding epitopes of the core domain. Cleavage after Arg-191 or Arg-193 by urokinase plasminogen activator gives rise to the active form.

The protein localises to the secreted. Growth factor that plays an essential role in the regulation of embryonic development, cell proliferation, cell migration, survival and chemotaxis. Potent mitogen for cells of mesenchymal origin. Plays an important role in wound healing. Induces macrophage recruitment, increased interstitial pressure, and blood vessel maturation during angiogenesis. Can initiate events that lead to a mesangial proliferative glomerulonephritis, including influx of monocytes and macrophages and production of extracellular matrix. This chain is Platelet-derived growth factor D (PDGFD), found in Oryctolagus cuniculus (Rabbit).